We begin with the raw amino-acid sequence, 329 residues long: UDP-N-acetylenolpyruvoylglucosamine reductase (329 aa).

Positions 28–192 constitute an FAD-binding PCMH-type domain; sequence RVGGPADLLC…ARVEVRLRPG (165 aa). R172 is an active-site residue. Residues 204–225 form a disordered region; sequence DRERRRATQPLDRPTFGSTFTN. The Proton donor role is filled by S221. Residue E291 is part of the active site. Residues 303-329 are disordered; sequence LAGLDGHAADGGGPGAASGGARPREAT. Gly residues predominate over residues 311–320; sequence ADGGGPGAAS.

The protein belongs to the MurB family. FAD serves as cofactor.

It is found in the cytoplasm. The enzyme catalyses UDP-N-acetyl-alpha-D-muramate + NADP(+) = UDP-N-acetyl-3-O-(1-carboxyvinyl)-alpha-D-glucosamine + NADPH + H(+). Its pathway is cell wall biogenesis; peptidoglycan biosynthesis. Its function is as follows. Cell wall formation. The protein is UDP-N-acetylenolpyruvoylglucosamine reductase of Anaeromyxobacter dehalogenans (strain 2CP-C).